Consider the following 223-residue polypeptide: Adenylate kinase (223 aa).

10-15 (GSGKGT) provides a ligand contact to ATP. An NMP region spans residues 30–59 (ESGAIFREHIGGGTELGKKAKAYIDRGDLV). AMP-binding positions include Ser-31, Arg-36, 57–59 (DLV), 84–87 (GFPR), and Gln-91. The segment at 125-164 (GRRLCKNNNNHPNNIFIEAIKPNGDVCRVCGGTLSSRSDD) is LID. Arg-126 provides a ligand contact to ATP. 2 residues coordinate AMP: Arg-161 and Arg-173. Gly-209 serves as a coordination point for ATP.

This sequence belongs to the adenylate kinase family. In terms of assembly, monomer.

The protein localises to the cytoplasm. The enzyme catalyses AMP + ATP = 2 ADP. Its pathway is purine metabolism; AMP biosynthesis via salvage pathway; AMP from ADP: step 1/1. Functionally, catalyzes the reversible transfer of the terminal phosphate group between ATP and AMP. Plays an important role in cellular energy homeostasis and in adenine nucleotide metabolism. The chain is Adenylate kinase from Desulfovibrio desulfuricans (strain ATCC 27774 / DSM 6949 / MB).